Here is a 360-residue protein sequence, read N- to C-terminus: Photosystem II protein D1 (360 aa).

The next 3 membrane-spanning stretches (helical) occupy residues 29–46 (YIGW…TATS), 118–133 (HFLL…EWEL), and 142–156 (WIFV…AASA). H118 is a binding site for chlorophyll a. Y126 contributes to the pheophytin a binding site. [CaMn4O5] cluster is bound by residues D170 and E189. Residues 197 to 218 (FHMAGVAGVFGGSLFSAMHGSL) traverse the membrane as a helical segment. Position 198 (H198) interacts with chlorophyll a. Residues H215 and 264–265 (SF) contribute to the a quinone site. H215 is a Fe cation binding site. H272 contacts Fe cation. The chain crosses the membrane as a helical span at residues 274 to 288 (FLALWPVLGIWLTAM). H332, E333, D342, and A344 together coordinate [CaMn4O5] cluster. A propeptide spanning residues 345 to 360 (SGDVLPVAFTAPAVNA) is cleaved from the precursor.

Belongs to the reaction center PufL/M/PsbA/D family. In terms of assembly, PSII is composed of 1 copy each of membrane proteins PsbA, PsbB, PsbC, PsbD, PsbE, PsbF, PsbH, PsbI, PsbJ, PsbK, PsbL, PsbM, PsbT, PsbX, PsbY, PsbZ, Psb30/Ycf12, at least 3 peripheral proteins of the oxygen-evolving complex and a large number of cofactors. It forms dimeric complexes. The D1/D2 heterodimer binds P680, chlorophylls that are the primary electron donor of PSII, and subsequent electron acceptors. It shares a non-heme iron and each subunit binds pheophytin, quinone, additional chlorophylls, carotenoids and lipids. D1 provides most of the ligands for the Mn4-Ca-O5 cluster of the oxygen-evolving complex (OEC). There is also a Cl(-1) ion associated with D1 and D2, which is required for oxygen evolution. The PSII complex binds additional chlorophylls, carotenoids and specific lipids. serves as cofactor. Tyr-161 forms a radical intermediate that is referred to as redox-active TyrZ, YZ or Y-Z. Post-translationally, C-terminally processed by CTPA; processing is essential to allow assembly of the oxygen-evolving complex and thus photosynthetic growth.

It is found in the plastid. The protein resides in the chloroplast thylakoid membrane. It catalyses the reaction 2 a plastoquinone + 4 hnu + 2 H2O = 2 a plastoquinol + O2. Its function is as follows. Photosystem II (PSII) is a light-driven water:plastoquinone oxidoreductase that uses light energy to abstract electrons from H(2)O, generating O(2) and a proton gradient subsequently used for ATP formation. It consists of a core antenna complex that captures photons, and an electron transfer chain that converts photonic excitation into a charge separation. The D1/D2 (PsbA/PsbD) reaction center heterodimer binds P680, the primary electron donor of PSII as well as several subsequent electron acceptors. This is Photosystem II protein D1 from Thalassiosira pseudonana (Marine diatom).